A 161-amino-acid polypeptide reads, in one-letter code: Ribonuclease P protein component 2 (161 aa).

Belongs to the eukaryotic/archaeal RNase P protein component 2 family. In terms of assembly, consists of a catalytic RNA component and at least 4-5 protein subunits.

It localises to the cytoplasm. It catalyses the reaction Endonucleolytic cleavage of RNA, removing 5'-extranucleotides from tRNA precursor.. Part of ribonuclease P, a protein complex that generates mature tRNA molecules by cleaving their 5'-ends. In Haloarcula marismortui (strain ATCC 43049 / DSM 3752 / JCM 8966 / VKM B-1809) (Halobacterium marismortui), this protein is Ribonuclease P protein component 2.